The primary structure comprises 100 residues: Urease subunit gamma (100 aa).

This sequence belongs to the urease gamma subunit family. Heterotrimer of UreA (gamma), UreB (beta) and UreC (alpha) subunits. Three heterotrimers associate to form the active enzyme.

The protein resides in the cytoplasm. It carries out the reaction urea + 2 H2O + H(+) = hydrogencarbonate + 2 NH4(+). The protein operates within nitrogen metabolism; urea degradation; CO(2) and NH(3) from urea (urease route): step 1/1. The sequence is that of Urease subunit gamma from Synechococcus sp. (strain CC9902).